The chain runs to 124 residues: Fluoride-specific ion channel FluC (124 aa).

4 consecutive transmembrane segments (helical) span residues L4–F24, F35–G55, I60–S80, and V102–S122. Na(+) is bound by residues G74 and T77.

The protein belongs to the fluoride channel Fluc/FEX (TC 1.A.43) family.

It localises to the cell inner membrane. The enzyme catalyses fluoride(in) = fluoride(out). With respect to regulation, na(+) is not transported, but it plays an essential structural role and its presence is essential for fluoride channel function. In terms of biological role, fluoride-specific ion channel. Important for reducing fluoride concentration in the cell, thus reducing its toxicity. The protein is Fluoride-specific ion channel FluC of Shewanella baltica (strain OS223).